Reading from the N-terminus, the 217-residue chain is Probable GTP-binding protein EngB (217 aa).

One can recognise an EngB-type G domain in the interval 24-207 (SQPEICFAGR…HELIESWLIP (184 aa)). GTP is bound by residues 32 to 39 (GRSNAGKS), 59 to 63 (GRTQH), 81 to 84 (DLPG), 148 to 151 (TKCD), and 185 to 188 (LFSA). Mg(2+)-binding residues include Ser-39 and Thr-61.

Belongs to the TRAFAC class TrmE-Era-EngA-EngB-Septin-like GTPase superfamily. EngB GTPase family. Requires Mg(2+) as cofactor.

Functionally, necessary for normal cell division and for the maintenance of normal septation. The chain is Probable GTP-binding protein EngB from Paraburkholderia phytofirmans (strain DSM 17436 / LMG 22146 / PsJN) (Burkholderia phytofirmans).